We begin with the raw amino-acid sequence, 604 residues long: Elongation factor 4 (604 aa).

A tr-type G domain is found at 7–189; that stretch reads SRIRNFSIIA…SIVHLVPPPD (183 aa). GTP is bound by residues 19 to 24 and 136 to 139; these read DHGKST and NKID.

This sequence belongs to the TRAFAC class translation factor GTPase superfamily. Classic translation factor GTPase family. LepA subfamily.

Its subcellular location is the cell inner membrane. It catalyses the reaction GTP + H2O = GDP + phosphate + H(+). Functionally, required for accurate and efficient protein synthesis under certain stress conditions. May act as a fidelity factor of the translation reaction, by catalyzing a one-codon backward translocation of tRNAs on improperly translocated ribosomes. Back-translocation proceeds from a post-translocation (POST) complex to a pre-translocation (PRE) complex, thus giving elongation factor G a second chance to translocate the tRNAs correctly. Binds to ribosomes in a GTP-dependent manner. This chain is Elongation factor 4, found in Gloeothece citriformis (strain PCC 7424) (Cyanothece sp. (strain PCC 7424)).